Reading from the N-terminus, the 194-residue chain is Peptidyl-tRNA hydrolase (194 aa).

Position 17 (Tyr17) interacts with tRNA. His22 acts as the Proton acceptor in catalysis. 3 residues coordinate tRNA: Phe68, Asn70, and Asn116.

The protein belongs to the PTH family. Monomer.

Its subcellular location is the cytoplasm. It carries out the reaction an N-acyl-L-alpha-aminoacyl-tRNA + H2O = an N-acyl-L-amino acid + a tRNA + H(+). In terms of biological role, hydrolyzes ribosome-free peptidyl-tRNAs (with 1 or more amino acids incorporated), which drop off the ribosome during protein synthesis, or as a result of ribosome stalling. Catalyzes the release of premature peptidyl moieties from peptidyl-tRNA molecules trapped in stalled 50S ribosomal subunits, and thus maintains levels of free tRNAs and 50S ribosomes. The sequence is that of Peptidyl-tRNA hydrolase from Pasteurella multocida (strain Pm70).